A 315-amino-acid chain; its full sequence is Pantothenate kinase (315 aa).

94 to 101 (GSVAVGKS) is an ATP binding site.

The protein belongs to the prokaryotic pantothenate kinase family.

The protein resides in the cytoplasm. The enzyme catalyses (R)-pantothenate + ATP = (R)-4'-phosphopantothenate + ADP + H(+). The protein operates within cofactor biosynthesis; coenzyme A biosynthesis; CoA from (R)-pantothenate: step 1/5. The protein is Pantothenate kinase of Shewanella amazonensis (strain ATCC BAA-1098 / SB2B).